The primary structure comprises 421 residues: MNKRSVIIAGIVASLLGLALGANFYFMYYLSAEEGHLASVRALENMIRHKMRHLKPNYLNRNPRFFMFRNKLLKNYKAAPYENASVLWDIANWWPHENEVYPLYDSSMGQLLETLRREPITRVSNLGRGTQLKLLVRLSHQQKVIFKPQWYPREEVIDGMIYSGKDRHTAEVYAFYLGAVLDFRWTPIVVGRVVNLKKEIYAKGDPELQQTINIETDEDGREKYCLFGKCHYCNEEETVCGDERHNIEGVLIYIVPGTLAKRRSPWQRTYKDDKRAPWEDDMTYCKSLKNKMETIRLLDLIDASIFDYLIQNGDRHHYETREERVVLIDNGKAFGNPNKDHLDILAPLYQCCLLRKSTWDRLQVFSGGVLTEIIDRLSKQDALYPLITDKHKKGVERRLLVVYAVVEHCMDIEGDKMFKTL.

The N-terminal stretch at 1–21 (MNKRSVIIAGIVASLLGLALG) is a signal peptide. Residue N83 is glycosylated (N-linked (GlcNAc...) asparagine). ATP-binding residues include Q131 and K147. D166 contributes to the Mn(2+) binding site. Intrachain disulfides connect C225–C240 and C230–C233. Residue 252 to 255 (IYIV) coordinates ATP. 2 disulfide bridges follow: C285/C351 and C352/C409. D314 is a catalytic residue. ATP-binding residues include E319 and D329. Residue D329 coordinates Mn(2+).

Belongs to the FAM20 family. Mn(2+) is required as a cofactor.

The protein resides in the golgi apparatus. The protein localises to the endoplasmic reticulum. It carries out the reaction 3-O-(beta-D-galactosyl-(1-&gt;3)-beta-D-galactosyl-(1-&gt;4)-beta-D-xylosyl)-L-seryl-[protein] + ATP = 3-O-(beta-D-galactosyl-(1-&gt;3)-beta-D-galactosyl-(1-&gt;4)-beta-D-2-O-phosphoxylosyl)-L-seryl-[protein] + ADP + H(+). Kylose kinase that mediates the 2-O-phosphorylation of xylose in the glycosaminoglycan-protein linkage region of proteoglycans. The chain is Glycosaminoglycan xylosylkinase homolog from Drosophila melanogaster (Fruit fly).